The following is a 213-amino-acid chain: mRNA-decapping protein OPG121 (213 aa).

The N(7)-methyl-GTP site is built by Glu16 and Arg50. The Nudix hydrolase domain occupies 30-209; that stretch reads KDTHVFAACI…EYLSYIYNIL (180 aa). A Nudix box motif is present at residues 111 to 132; it reads GKLDKKESIKDCLRRELKEESD. Positions 126 and 130 each coordinate Mg(2+). Asp151 serves as a coordination point for N(7)-methyl-GTP. Glu183 lines the Mg(2+) pocket.

The protein belongs to the Nudix hydrolase family. In terms of assembly, interacts with the late transcription elongation factor VLTF-4/OPG110. Interacts with the late transcription factors VLTF-1. Requires Mg(2+) as cofactor. Mn(2+) serves as cofactor.

The enzyme catalyses a 5'-end (N(7)-methyl 5'-triphosphoguanosine)-guanosine in mRNA + H2O = a 5'-end phospho-guanosine in mRNA + N(7)-methyl-GDP + 2 H(+). Acts with RNA polymerase to initiate transcription from late gene promoters. The polypeptide is mRNA-decapping protein OPG121 (OPG121) (Cynomys gunnisoni (Gunnison's prairie dog)).